The chain runs to 571 residues: Sulfite reductase [NADPH] hemoprotein beta-component (571 aa).

The [4Fe-4S] cluster site is built by Cys-436, Cys-442, Cys-481, and Cys-485. Position 485 (Cys-485) interacts with siroheme.

This sequence belongs to the nitrite and sulfite reductase 4Fe-4S domain family. Alpha(8)-beta(8). The alpha component is a flavoprotein, the beta component is a hemoprotein. It depends on siroheme as a cofactor. [4Fe-4S] cluster serves as cofactor.

The enzyme catalyses hydrogen sulfide + 3 NADP(+) + 3 H2O = sulfite + 3 NADPH + 4 H(+). Its pathway is sulfur metabolism; hydrogen sulfide biosynthesis; hydrogen sulfide from sulfite (NADPH route): step 1/1. In terms of biological role, component of the sulfite reductase complex that catalyzes the 6-electron reduction of sulfite to sulfide. This is one of several activities required for the biosynthesis of L-cysteine from sulfate. This is Sulfite reductase [NADPH] hemoprotein beta-component from Anoxybacillus flavithermus (strain DSM 21510 / WK1).